A 276-amino-acid polypeptide reads, in one-letter code: Glucosamine-6-phosphate deaminase 2 (276 aa).

Residue Asp72 is the Proton acceptor; for enolization step of the active site. The stretch at 105-130 (HILDGNAADLQAECDAFENKIKEAGG) forms a coiled coil. Asp141 serves as the catalytic For ring-opening step. Residue His143 is the Proton acceptor; for ring-opening step of the active site. Residue Glu148 is the For ring-opening step of the active site. Residue Thr161 is modified to Phosphothreonine.

This sequence belongs to the glucosamine/galactosamine-6-phosphate isomerase family. In terms of assembly, homohexamer. In terms of tissue distribution, ubiquitous, with highest expression detected in testis, ovary, placenta, and heart.

It localises to the cytoplasm. The catalysed reaction is alpha-D-glucosamine 6-phosphate + H2O = beta-D-fructose 6-phosphate + NH4(+). Its pathway is nucleotide-sugar biosynthesis; UDP-N-acetyl-alpha-D-glucosamine biosynthesis; alpha-D-glucosamine 6-phosphate from D-fructose 6-phosphate: step 1/1. Its activity is regulated as follows. Allosterically activated by N-acetylglucosamine-6-phosphate (GlcNAc6P). Catalyzes the reversible conversion of alpha-D-glucosamine 6-phosphate (GlcN-6P) into beta-D-fructose 6-phosphate (Fru-6P) and ammonium ion, a regulatory reaction step in de novo uridine diphosphate-N-acetyl-alpha-D-glucosamine (UDP-GlcNAc) biosynthesis via hexosamine pathway. Deamination is coupled to aldo-keto isomerization mediating the metabolic flux from UDP-GlcNAc toward Fru-6P. At high ammonium level can drive amination and isomerization of Fru-6P toward hexosamines and UDP-GlcNAc synthesis. Has a role in fine tuning the metabolic fluctuations of cytosolic UDP-GlcNAc and their effects on hyaluronan synthesis that occur during tissue remodeling. This Homo sapiens (Human) protein is Glucosamine-6-phosphate deaminase 2.